The chain runs to 157 residues: Protein NrdI (157 aa).

The protein belongs to the NrdI family.

Its function is as follows. Probably involved in ribonucleotide reductase function. This is Protein NrdI from Mycoplasma capricolum subsp. capricolum (strain California kid / ATCC 27343 / NCTC 10154).